We begin with the raw amino-acid sequence, 790 residues long: Probable copper-transporting ATPase SynA (790 aa).

Topologically, residues 1–105 are cytoplasmic; it reads MPAAIVHSAD…IPPLQQQRLQ (105 aa). Positions 14–81 constitute an HMA domain; the sequence is TSILVEVEGM…EITGLGFRAQ (68 aa). Residues C25 and C28 each coordinate Cu cation. A helical membrane pass occupies residues 106–125; sequence LAIAAFLLIVSSWGHLGHWL. Topologically, residues 126-134 are extracellular; sequence DHPLPGTDQ. The helical transmembrane segment at 135-154 threads the bilayer; the sequence is LWFHALLAIWALLGPGRSIL. Over 155–166 the chain is Cytoplasmic; the sequence is QAGWQGLRCGAP. Residues 167-189 form a helical membrane-spanning segment; the sequence is NMNSLVLLGTGSAYLASLVALLW. At 190 to 193 the chain is on the extracellular side; it reads PQLG. The helical transmembrane segment at 194–211 threads the bilayer; that stretch reads WVCFLDEPVMLLGFILLG. Topologically, residues 212–357 are cytoplasmic; it reads RTLEEQARFR…RKAPVQRFAD (146 aa). The chain crosses the membrane as a helical span at residues 358-380; that stretch reads AIAGRFVYGVCAIAALTFGFWAT. The Extracellular portion of the chain corresponds to 381 to 416; that stretch reads LGSRWWPQVLQQPLPGLLIHAPHHGMEMAHPHSHSP. A helical membrane pass occupies residues 417–439; sequence LLLALTLAISVLVVACPCALGLA. At 440-726 the chain is on the cytoplasmic side; sequence TPTAILVATG…QMGLRTIRQN (287 aa). D476 functions as the 4-aspartylphosphate intermediate in the catalytic mechanism. Mg(2+)-binding residues include D669 and D673. A helical transmembrane segment spans residues 727–749; that stretch reads LTWALGYNVVMLPLAAGAFLPAY. At 750 to 753 the chain is on the extracellular side; the sequence is GLAL. A helical membrane pass occupies residues 754-776; that stretch reads TPAIAGACMAVSSLAVVSNSLLL. Residues 777–790 lie on the Cytoplasmic side of the membrane; it reads RYWFRRSLNHSVSV.

The protein belongs to the cation transport ATPase (P-type) (TC 3.A.3) family. Type IB subfamily.

It is found in the cell membrane. It carries out the reaction Cu(2+)(in) + ATP + H2O = Cu(2+)(out) + ADP + phosphate + H(+). Its function is as follows. Involved in copper transport. In Synechococcus sp. (strain ATCC 27144 / PCC 6301 / SAUG 1402/1) (Anacystis nidulans), this protein is Probable copper-transporting ATPase SynA (synA).